Reading from the N-terminus, the 382-residue chain is Nuclear hormone receptor family member nhr-106 (382 aa).

The segment at residues 2–78 (QTTCEICEVP…MGMMPEKVKV (77 aa)) is a DNA-binding region (nuclear receptor). 2 consecutive NR C4-type zinc fingers follow at residues 5–25 (CEICEVPAHGIHFGAITCRGC) and 42–61 (CKYSSNCTNFTGKFPQCKSC). Residues 110-380 (DVSNLITRGL…FSNPEMFIDS (271 aa)) enclose the NR LBD domain.

This sequence belongs to the nuclear hormone receptor family.

It localises to the nucleus. Functionally, orphan nuclear receptor. The polypeptide is Nuclear hormone receptor family member nhr-106 (nhr-106) (Caenorhabditis elegans).